Here is a 208-residue protein sequence, read N- to C-terminus: N-(5'-phosphoribosyl)anthranilate isomerase (208 aa).

This sequence belongs to the TrpF family.

It carries out the reaction N-(5-phospho-beta-D-ribosyl)anthranilate = 1-(2-carboxyphenylamino)-1-deoxy-D-ribulose 5-phosphate. Its pathway is amino-acid biosynthesis; L-tryptophan biosynthesis; L-tryptophan from chorismate: step 3/5. The polypeptide is N-(5'-phosphoribosyl)anthranilate isomerase (Methanothrix thermoacetophila (strain DSM 6194 / JCM 14653 / NBRC 101360 / PT) (Methanosaeta thermophila)).